Here is a 280-residue protein sequence, read N- to C-terminus: Ribosomal RNA small subunit methyltransferase A (280 aa).

S-adenosyl-L-methionine contacts are provided by histidine 15, leucine 17, glycine 42, glutamate 64, aspartate 89, and asparagine 109.

This sequence belongs to the class I-like SAM-binding methyltransferase superfamily. rRNA adenine N(6)-methyltransferase family. RsmA subfamily.

The protein localises to the cytoplasm. The catalysed reaction is adenosine(1518)/adenosine(1519) in 16S rRNA + 4 S-adenosyl-L-methionine = N(6)-dimethyladenosine(1518)/N(6)-dimethyladenosine(1519) in 16S rRNA + 4 S-adenosyl-L-homocysteine + 4 H(+). Functionally, specifically dimethylates two adjacent adenosines (A1518 and A1519) in the loop of a conserved hairpin near the 3'-end of 16S rRNA in the 30S particle. May play a critical role in biogenesis of 30S subunits. In Prochlorococcus marinus (strain MIT 9303), this protein is Ribosomal RNA small subunit methyltransferase A.